A 352-amino-acid chain; its full sequence is Ion-translocating oxidoreductase complex subunit D (352 aa).

The next 4 membrane-spanning stretches (helical) occupy residues 20–40 (IMLLVVIAALPGIAAQTWFFG), 42–62 (GTLFQIVLAAITALVAEAIVL), 69–91 (VASHLQDYSALLTGLLLAVSIPP), and 123–143 (PAMIGYVVLLISFPVQMTSWL). FMN phosphoryl threonine is present on threonine 187. 5 helical membrane-spanning segments follow: residues 215-235 (LAGVGWQWVNLAWLVGGVFLL), 242-262 (WHIPVSFLLTLALCAALGWLF), 267-287 (LASPQLHLLSGATMLGAFFIL), 301-321 (LIFGALAGVLVWLIRSFGGYP), and 322-342 (DGVAFAVLLANITVPLIDYYT).

The protein belongs to the NqrB/RnfD family. In terms of assembly, the complex is composed of six subunits: RsxA, RsxB, RsxC, RsxD, RsxE and RsxG. The cofactor is FMN.

It is found in the cell inner membrane. Its function is as follows. Part of a membrane-bound complex that couples electron transfer with translocation of ions across the membrane. Required to maintain the reduced state of SoxR. This chain is Ion-translocating oxidoreductase complex subunit D, found in Salmonella agona (strain SL483).